Here is a 134-residue protein sequence, read N- to C-terminus: Bradykinin-related peptides (134 aa).

The signal sequence occupies residues 1-22; that stretch reads MAFLKKSLFLVLFLGVVSLSFC. 3 consecutive propeptides follow at residues 23–44, 71–82, and 99–121; these read EEEK…ESLG, RSISGLTPIRLS, and ISEA…PLRG. The span at 24 to 33 shows a compositional bias: basic and acidic residues; it reads EEKREEHEEE. A disordered region spans residues 24–71; it reads EEKREEHEEEKRDEEDAESLGKRYGGLSPLRISKRVPPGFTPFRSPAR. Residue Pro126 is modified to 4-hydroxyproline; partial; in form [Hyp3]-bradykinin and [Hyp3]-bradykinin-Val,Asp.

The protein belongs to the frog skin active peptide (FSAP) family. Bradykinin-related peptide subfamily. Expressed by the skin glands. Expression levels in inguinal glands are much higher than in granular glands.

The protein resides in the secreted. Its function is as follows. May produce in vitro relaxation of rat arterial smooth muscle and constriction of intestinal smooth muscle. May target bradykinin receptors (BDKRB). This is Bradykinin-related peptides from Physalaemus nattereri (Cuyaba dwarf frog).